The following is a 217-amino-acid chain: Uracil-DNA glycosylase (217 aa).

Asp62 serves as the catalytic Proton acceptor.

This sequence belongs to the uracil-DNA glycosylase (UDG) superfamily. UNG family.

It localises to the cytoplasm. The catalysed reaction is Hydrolyzes single-stranded DNA or mismatched double-stranded DNA and polynucleotides, releasing free uracil.. Functionally, excises uracil residues from the DNA which can arise as a result of misincorporation of dUMP residues by DNA polymerase or due to deamination of cytosine. The polypeptide is Uracil-DNA glycosylase (Streptococcus pneumoniae serotype 19F (strain G54)).